Consider the following 299-residue polypeptide: MQFKRAWKQVDGVLLLDKPLGMTSNDALQKARRLFSAAKGGHTGTLDPLATGLLPLCFGEATKFSADLLDADKTYEAVLKLGVTTDSGDAEGQVTSTAMVDIQKEQVSEVLPRFVGDIQQIPPMHSALKRNGRPLYELARQGIEVEREPRAVTIFAIDCLDFSGDLLTLRVACSKGTYIRVLAADIGKALGCGAHLAALRRIVVGDIRLGNSVTLAELETLDEAGRMERLLPVDALLQSLPIVGVEGPEAERFRHGNPVSLPAGLAGKARVYAEGRLIGVGEPGHGGLLWPKRLVQLAD.

Asp-47 (nucleophile) is an active-site residue.

This sequence belongs to the pseudouridine synthase TruB family. Type 1 subfamily.

It catalyses the reaction uridine(55) in tRNA = pseudouridine(55) in tRNA. Its function is as follows. Responsible for synthesis of pseudouridine from uracil-55 in the psi GC loop of transfer RNAs. In Dechloromonas aromatica (strain RCB), this protein is tRNA pseudouridine synthase B.